The following is a 305-amino-acid chain: Protein MFI (305 aa).

In terms of assembly, can homodimerize. Interacts with MFF; the interaction inhibits MFF interaction with DNM1L.

It is found in the cytoplasm. It localises to the cytosol. Its subcellular location is the mitochondrion outer membrane. Acts as an inhibitor of mitochondrial fission. Interacts with MFF and prevents DNM1L recruitment to mitochondria, promoting a more fused mitochondrial network. This is Protein MFI from Rattus norvegicus (Rat).